The chain runs to 2587 residues: Protein KINKY POLLEN (2587 aa).

An N-terminal signal peptide occupies residues 1–27; it reads MAAFLVMFIFTIALFVALLWVFFKSLP. An N-linked (GlcNAc...) asparagine glycan is attached at N71. The disordered stretch occupies residues 103-124; it reads PSHSSKGPRKPKTRKSSSGGKG. Basic residues predominate over residues 108–117; sequence KGPRKPKTRK. Residues N262, N281, and N485 are each glycosylated (N-linked (GlcNAc...) asparagine). Residues 270–290 are disordered; it reads SKGEVIDSSSGNTTSEKPPKQ. The segment covering 276 to 285 has biased composition (polar residues); the sequence is DSSSGNTTSE. The interval 589–611 is disordered; it reads GSSSKNKQEKGAHRSKPPSGRGT. Residues 691-716 adopt a coiled-coil conformation; that stretch reads TLNKEIQSTQVELETAKAIYQEFLEE. A disordered region spans residues 784–814; it reads QHGNRNPEEASTVTGDKQKEEPTTTPNSLDK. N-linked (GlcNAc...) asparagine glycosylation is found at N1155, N1250, N1281, and N1486. Disordered stretches follow at residues 1571–1608, 1646–1673, and 1729–1797; these read HCSK…KHPD, VDAR…DGYN, and EGNQ…PEEE. Polar residues predominate over residues 1576 to 1590; the sequence is AQMSRTSSLSGSTDR. N1595 carries an N-linked (GlcNAc...) asparagine glycan. The span at 1646–1666 shows a compositional bias: basic and acidic residues; that stretch reads VDARSTKEKQSEPEENSHSDP. The segment covering 1746-1760 has biased composition (polar residues); it reads KQPSTGSGNLASQSK. Residues N1861, N1951, N1981, N2036, and N2278 are each glycosylated (N-linked (GlcNAc...) asparagine). Residues 2006 to 2036 adopt a coiled-coil conformation; that stretch reads IEEVELAKIELEAKERDRMMLLDDIRKLTQN. Residues 2274 to 2287 show a composition bias toward polar residues; sequence QGSKNQSLKSSTIR. Disordered regions lie at residues 2274 to 2299, 2319 to 2360, and 2442 to 2469; these read QGSK…TSSF, SMEH…KKSR, and KDDI…RPGD. Basic and acidic residues-rich tracts occupy residues 2289–2299, 2322–2336, 2343–2359, and 2442–2458; these read SGRELRRTSSF, HQGE…DSKT, SVHE…DKKS, and KDDI…RTDQ. Residues N2513 and N2544 are each glycosylated (N-linked (GlcNAc...) asparagine). Residues 2533–2587 are disordered; the sequence is IRRHSKKFQNQNTTKGSKKTQLSPTLSPPKEEDQYESDSSSGSSAYEEFLDQNQI. Residues 2540–2557 show a composition bias toward polar residues; the sequence is FQNQNTTKGSKKTQLSPT. The span at 2569 to 2579 shows a compositional bias: low complexity; it reads SDSSSGSSAYE.

Belongs to the SABRE family. Mostly expressed in pollen and roots, especially in tip-growing cells, but also present in seedlings, stems, leaves, buds, flowers, siliques and seeds.

It localises to the secreted. Its subcellular location is the golgi apparatus. Functionally, may be involved in membrane trafficking. Required for tip growth in pollen tubes and root hairs. In Arabidopsis thaliana (Mouse-ear cress), this protein is Protein KINKY POLLEN.